The chain runs to 283 residues: MKFFNLNALAAVVTGVLLAAGPTQAKDYKSITIATEGSYAPYNFKDAGGKLIGFDIDLGNDLCKRMNIECKFVEQAWDGIIPSLTAGRYDAIMAAMGIQPAREKVIAFSRPYLLTPMTFLTTADSPLLKTQVAIENLPLDNITPEQKAELDKFTKIFEGVKFGVQAGTSHEAFMKQMMPSVQISTYDTIDNVVMDLKAGRIDASLASVSFLKPLTDKPDNKDLKMFGPRMTGGLFGKGVGVGIRKEDADLKALFDKAIDAAIADGTVQKLSQQWFGYDASPKQ.

A signal peptide spans 1 to 25 (MKFFNLNALAAVVTGVLLAAGPTQA). The cysteines at positions 63 and 70 are disulfide-linked.

This sequence belongs to the bacterial solute-binding protein 3 family.

Its subcellular location is the periplasm. Functionally, component of the nopaline active transport system probably consisting of four subunits: Q, M, P and T. This system is also capable of transporting octopine provided that catabolic functions are induced with nopaline. The chain is Nopaline-binding periplasmic protein (nocT) from Agrobacterium fabrum (strain C58 / ATCC 33970) (Agrobacterium tumefaciens (strain C58)).